Consider the following 463-residue polypeptide: Bifunctional protein HldE (463 aa).

A ribokinase region spans residues 1–311; it reads MKKILVVGDL…EEIALILNQT (311 aa). 191-194 contributes to the ATP binding site; sequence NRFE. Asp260 is an active-site residue. Residues 334–463 form a cytidylyltransferase region; it reads FTNGCFDLLH…IEKIKRTCND (130 aa).

This sequence in the N-terminal section; belongs to the carbohydrate kinase PfkB family. In the C-terminal section; belongs to the cytidylyltransferase family. In terms of assembly, homodimer.

The enzyme catalyses D-glycero-beta-D-manno-heptose 7-phosphate + ATP = D-glycero-beta-D-manno-heptose 1,7-bisphosphate + ADP + H(+). It carries out the reaction D-glycero-beta-D-manno-heptose 1-phosphate + ATP + H(+) = ADP-D-glycero-beta-D-manno-heptose + diphosphate. The protein operates within nucleotide-sugar biosynthesis; ADP-L-glycero-beta-D-manno-heptose biosynthesis; ADP-L-glycero-beta-D-manno-heptose from D-glycero-beta-D-manno-heptose 7-phosphate: step 1/4. It participates in nucleotide-sugar biosynthesis; ADP-L-glycero-beta-D-manno-heptose biosynthesis; ADP-L-glycero-beta-D-manno-heptose from D-glycero-beta-D-manno-heptose 7-phosphate: step 3/4. In terms of biological role, catalyzes the phosphorylation of D-glycero-D-manno-heptose 7-phosphate at the C-1 position to selectively form D-glycero-beta-D-manno-heptose-1,7-bisphosphate. Catalyzes the ADP transfer from ATP to D-glycero-beta-D-manno-heptose 1-phosphate, yielding ADP-D-glycero-beta-D-manno-heptose. The protein is Bifunctional protein HldE of Helicobacter pylori (strain G27).